The following is a 411-amino-acid chain: Carbohydrate sulfotransferase 1 (411 aa).

At 1 to 2 the chain is on the cytoplasmic side; sequence MQ. Residues 3–23 traverse the membrane as a helical; Signal-anchor for type II membrane protein segment; the sequence is CSWKAVLLLALASIAIQYTAI. Residues 24–411 lie on the Lumenal side of the membrane; sequence RTFTAKSFHT…VEERDFRPFL (388 aa). N-linked (GlcNAc...) asparagine glycosylation occurs at asparagine 56. A 3'-phosphoadenylyl sulfate-binding site is contributed by 69-75; it reads TRSGSSF. Asparagine 145 and asparagine 189 each carry an N-linked (GlcNAc...) asparagine glycan. 234-242 contacts 3'-phosphoadenylyl sulfate; that stretch reads RDPRGILAS. Asparagine 334 carries an N-linked (GlcNAc...) asparagine glycan. A Cell attachment site motif is present at residues 337 to 339; that stretch reads RGD.

It belongs to the sulfotransferase 1 family. Gal/GlcNAc/GalNAc subfamily. In terms of tissue distribution, broadly expressed with highest levels in central nervous system. Expressed in cortex (at protein level). Expressed in high endothelial venules in peripheral lymph nodes, mesenteric lymph nodes and Peyer's patches.

Its subcellular location is the golgi apparatus membrane. It carries out the reaction 3'-phosphoadenylyl sulfate + keratan = adenosine 3',5'-bisphosphate + keratan 6'-sulfate.. It participates in glycan metabolism. Sulfotransferase that utilizes 3'-phospho-5'-adenylyl sulfate (PAPS) as sulfonate donor to catalyze the transfer of sulfate to position 6 of internal galactose (Gal) residues of keratan. Cooperates with B4GALT4 and B3GNT7 glycosyltransferases and CHST6 sulfotransferase to construct and elongate disulfated disaccharide unit [-&gt;3(6-sulfoGalbeta)1-&gt;4(6-sulfoGlcNAcbeta)1-&gt;] within keratan sulfate polymer. Has a preference for sulfating keratan sulfate, but it also transfers sulfate to the unsulfated polymer. Involved in biosynthesis of phosphacan, a major keratan sulfate proteoglycan in the developing brain. Involved in biosynthesis of 6-sulfoGalbeta-containing O-linked glycans in high endothelial venules of lymph nodes. May act in a synergistic manner with CHST4 to generate sialyl 6',6-disulfo Lewis X motif, a recognition determinant for immune cell receptors implicated in leukocyte trafficking. Catalyzes sulfation of N-acetyllactosamine (LacNAc) oligosaccharides with highest efficiency for sialylated LacNAc structures. In Mus musculus (Mouse), this protein is Carbohydrate sulfotransferase 1 (Chst1).